A 368-amino-acid polypeptide reads, in one-letter code: H-2 class I histocompatibility antigen, D-P alpha chain (368 aa).

A signal peptide spans 1–21 (MAPRTLLLLLAAALAPTQTRA). The interval 22 to 111 (GPHSLRYFVT…LLGYYNQSKG (90 aa)) is alpha-1. The Extracellular segment spans residues 22–303 (GPHSLRYFVT…RWEPPPSTDS (282 aa)). Residue asparagine 107 is glycosylated (N-linked (GlcNAc...) asparagine). Positions 112-203 (GSHTIQGMRG…ELGNATLLCT (92 aa)) are alpha-2. Cysteine 122 and cysteine 185 are oxidised to a cystine. N-linked (GlcNAc...) asparagine glycans are attached at residues asparagine 197 and asparagine 277. Residues 204–295 (DPPKAHVTHH…GLPEPLTLRW (92 aa)) are alpha-3. One can recognise an Ig-like C1-type domain in the interval 206–294 (PKAHVTHHPR…EGLPEPLTLR (89 aa)). The cysteines at positions 224 and 280 are disulfide-linked. The connecting peptide stretch occupies residues 296 to 303 (EPPPSTDS). A helical transmembrane segment spans residues 304–330 (YMVIVAVLVVLGAVFIIGAVVAFVMMM). Residues 331–368 (RRNTGGKGGDYTLAPGSQSSEMSLRDCKVMVHDSHSLA) are Cytoplasmic-facing. Phosphoserine is present on residues serine 350 and serine 353.

This sequence belongs to the MHC class I family. As to quaternary structure, heterodimer of an alpha chain and a beta chain (beta-2-microglobulin).

Its subcellular location is the membrane. Involved in the presentation of foreign antigens to the immune system. This chain is H-2 class I histocompatibility antigen, D-P alpha chain (H2-D1), found in Mus musculus (Mouse).